Reading from the N-terminus, the 417-residue chain is MQKLVIHGGSKLHGEISISGAKNAALPVLCASLLTAEPFAIQNIPHLRDVTTMLALLEQIGVRILTNEPGTTELSAANITNPTASYDMVKTMRAAILVLGPLLARTGQAHISLPGGCAIGMRPVDQHIKGLQAMGAEINIEQGYILAQVGRLSGARIAMDVVTVTGTENLMMAATLASGTTILENAAREPEVIDLANCLIGMGAKIEGAGNDIIIIEGVDRLHGGSHVVMPDRIETGTFLTAVAACGGDVTLIGTRADTLDVVLGKLAEAGADIDIGGDWIRLCMQQRPQPVSLRTAPYPAFPTDMQAQFMALNSIAGGTSIMTETIFENRFMHVQELTRLNADIQVEGNTAIVHGIPQLDGASVMATDLRASACLIIAGLIAQGETIVDRIYHLDRGYEQIEQKLAQVGAHIKRIN.

22-23 (KN) contacts phosphoenolpyruvate. Arg93 is a UDP-N-acetyl-alpha-D-glucosamine binding site. The active-site Proton donor is Cys117. Cys117 is subject to 2-(S-cysteinyl)pyruvic acid O-phosphothioketal. UDP-N-acetyl-alpha-D-glucosamine is bound by residues 122-126 (RPVDQ), Asp305, and Ile327.

Belongs to the EPSP synthase family. MurA subfamily.

The protein resides in the cytoplasm. The enzyme catalyses phosphoenolpyruvate + UDP-N-acetyl-alpha-D-glucosamine = UDP-N-acetyl-3-O-(1-carboxyvinyl)-alpha-D-glucosamine + phosphate. It functions in the pathway cell wall biogenesis; peptidoglycan biosynthesis. Functionally, cell wall formation. Adds enolpyruvyl to UDP-N-acetylglucosamine. This chain is UDP-N-acetylglucosamine 1-carboxyvinyltransferase, found in Nitrosomonas eutropha (strain DSM 101675 / C91 / Nm57).